We begin with the raw amino-acid sequence, 230 residues long: Flagellar L-ring protein (230 aa).

Residues 1-15 (MSRLPSLSSLCLAIA) form the signal peptide. Cys16 is lipidated: N-palmitoyl cysteine. Residue Cys16 is the site of S-diacylglycerol cysteine attachment.

This sequence belongs to the FlgH family. In terms of assembly, the basal body constitutes a major portion of the flagellar organelle and consists of four rings (L,P,S, and M) mounted on a central rod.

It is found in the cell outer membrane. It localises to the bacterial flagellum basal body. Its function is as follows. Assembles around the rod to form the L-ring and probably protects the motor/basal body from shearing forces during rotation. The sequence is that of Flagellar L-ring protein from Xanthomonas campestris pv. campestris (strain 8004).